The primary structure comprises 272 residues: DNA repair protein RecO (272 aa).

It belongs to the RecO family.

Involved in DNA repair and RecF pathway recombination. This is DNA repair protein RecO from Limosilactobacillus fermentum (strain NBRC 3956 / LMG 18251) (Lactobacillus fermentum).